Consider the following 180-residue polypeptide: ATP synthase subunit b (180 aa).

The chain crosses the membrane as a helical span at residues 26-48 (SMILFWKAVNTVILLGLVYYFGG).

The protein belongs to the ATPase B chain family. In terms of assembly, F-type ATPases have 2 components, F(1) - the catalytic core - and F(0) - the membrane proton channel. F(1) has five subunits: alpha(3), beta(3), gamma(1), delta(1), epsilon(1). F(0) has three main subunits: a(1), b(2) and c(10-14). The alpha and beta chains form an alternating ring which encloses part of the gamma chain. F(1) is attached to F(0) by a central stalk formed by the gamma and epsilon chains, while a peripheral stalk is formed by the delta and b chains.

Its subcellular location is the cell inner membrane. Its function is as follows. F(1)F(0) ATP synthase produces ATP from ADP in the presence of a proton or sodium gradient. F-type ATPases consist of two structural domains, F(1) containing the extramembraneous catalytic core and F(0) containing the membrane proton channel, linked together by a central stalk and a peripheral stalk. During catalysis, ATP synthesis in the catalytic domain of F(1) is coupled via a rotary mechanism of the central stalk subunits to proton translocation. Functionally, component of the F(0) channel, it forms part of the peripheral stalk, linking F(1) to F(0). The sequence is that of ATP synthase subunit b from Sulfurihydrogenibium sp. (strain YO3AOP1).